A 570-amino-acid polypeptide reads, in one-letter code: Cytoplasmic polyadenylation element-binding protein 2 (570 aa).

The RRM domain maps to 434 to 516 (LVAFIGGVPR…KRVEIKPYFF (83 aa)).

As to expression, expressed specifically in the spermatogenic germ line.

Functionally, cytoplasmic polyadenylation element binding protein that binds to and regulates the translation of specific mRNAs. Not required for oogenesis. The polypeptide is Cytoplasmic polyadenylation element-binding protein 2 (cpb-2) (Caenorhabditis elegans).